Consider the following 1270-residue polypeptide: Myosin-3 (1270 aa).

Residues 1–20 form a disordered region; it reads MAVIKKGARRKDVKEPKKRS. The region spanning 36 to 715 is the Myosin motor domain; the sequence is VGVSDLTLLS…SLFALEDMRD (680 aa). 129 to 136 contributes to the ATP binding site; that stretch reads GESGAGKT. S357 is modified (phosphoserine). An actin-binding region spans residues 404–486; it reads SIGILDIYGF…PGILAAMNDS (83 aa). 2 consecutive IQ domains span residues 719-739 and 740-765; these read YNMA…RIDA and AIKI…YGTK. Residues 771–961 form the TH1 domain; that stretch reads KERRSMSLLG…TIYVRRGHPA (191 aa). 3 disordered regions span residues 951–1015, 1029–1136, and 1215–1270; these read STIY…QKPV, YNPK…GSSS, and VQFG…DDDW. Positions 980–1000 are enriched in basic residues; that stretch reads IKSKKSKHKSTHKHTHSHRSH. Residues 1066-1078 are compositionally biased toward low complexity; that stretch reads KKASSSHKSSSAK. Over residues 1089 to 1098 the composition is skewed to basic and acidic residues; the sequence is GVEKNKEPLK. The span at 1107–1116 shows a compositional bias: pro residues; the sequence is PIPPPPPPMG. The SH3 domain maps to 1118-1180; sequence PKDPKFEAAY…PTAYMTPYKD (63 aa). Over residues 1215 to 1234 the composition is skewed to polar residues; it reads VQFGSATVGPTSDNQSNPVG. The segment covering 1256 to 1270 has biased composition (acidic residues); sequence ADDDDNDDGDDDDDW.

This sequence belongs to the TRAFAC class myosin-kinesin ATPase superfamily. Myosin family. As to quaternary structure, interacts (via myosin motor domain) with SHE4; this interaction is important for proper localization and may regulate the interaction of the motor domain with actin. Interacts (via SH3 domain) with VRP1; this interaction is required for localization to sites of polarized growth and may regulate the interaction of the tail domain with actin. Interacts (via SH3 domain) with PAN1; this interaction is important for late stages of endocytopsis. Interacts (via SH3 domain) with BBC1 and LAS17. Interacts (via C-terminal acidic tail) with ARC19 and ARC40; ARC19 and ARC40 are Arp2/3 complex subunits. In terms of processing, phosphorylation of the TEDS site (Ser-357) is required for the polarization of the actin cytoskeleton and for ligand-induced, but not for constitutive internalization of STE2. Phosphorylation probably activates the myosin-I ATPase. Ser-357 is phosphorylated by CLA4 and STE20 in vitro.

It localises to the cytoplasm. Its subcellular location is the cytoskeleton. It is found in the actin patch. One of two redundant type-I myosins implicated in the organization of the actin cytoskeleton. Required for proper actin cytoskeleton polarization and for the internalization step in endocytosis. At the cell cortex, assembles in patch-like structures together with proteins from the actin-polymerizing machinery and promotes actin assembly. Functions redundantly with LAS17 as actin nucleation-promoting factor (NPF) for the Arp2/3 complex. Motor domain phosphorylation by PAK kinases CLA4 and STE20 promotes CDC42-regulated actin assembly. Functions together with the NPF PAN1 in late stages of endocytosis. Motor domain phosphorylation by PDK1 kinases PKH1 and PKH2, and by SGK kinases YPK1 and YPK2, promotes ligand-induced, but not constitutive endocytosis of the G protein-coupled receptor STE2. This is Myosin-3 (MYO3) from Saccharomyces cerevisiae (strain YJM789) (Baker's yeast).